The following is a 344-amino-acid chain: UPF0283 membrane protein YcjF (344 aa).

Helical transmembrane passes span 70–90 (MVMG…VQWT), 100–120 (VALG…GSVV), and 213–233 (ESTL…FIAW).

It belongs to the UPF0283 family.

It is found in the cell inner membrane. In Shigella dysenteriae serotype 1 (strain Sd197), this protein is UPF0283 membrane protein YcjF.